Consider the following 230-residue polypeptide: Lactate utilization protein C (230 aa).

This sequence belongs to the LutC/YkgG family.

Its function is as follows. Is involved in L-lactate degradation and allows cells to grow with lactate as the sole carbon source. The chain is Lactate utilization protein C from Exiguobacterium sp. (strain ATCC BAA-1283 / AT1b).